The chain runs to 394 residues: MSQLETRTEPMVVNFGPHHPSMHGVLRLVVTLDGEDVVDCEPVIGYLHRGMEKIAENRTNVMFVPYVSRMDYAAGMFYEAIVVNAPERLAKISVPKRASYIRVLMLELNRIANHLLWLGPFLADVGAQTPFFYIFREREMIYDLWEAATGQRLINNNYFRIGGVACDLPSGWLEKCTDFCKWFGPKIDEYEKLITNNPIFRRRIEGLGAISREEAINWSLSGPMLRASGVSWDLRKVDHYECYDDFDWSISTATEGDCFARYRVRIEEMRQSLKILLQACEMIPGGPTENLEASRMLEGKGSKFAGFDYQYVAKKVAPTFKIPDGELYTRLESGKGEIGVFIQGNNDVTPWRFKIRAADLNNLQILPHILKGAKVADIMAILGSIDVIMGSVDR.

It belongs to the complex I 49 kDa subunit family. As to quaternary structure, NDH-1 can be composed of about 15 different subunits; different subcomplexes with different compositions have been identified which probably have different functions.

It localises to the cellular thylakoid membrane. It catalyses the reaction a plastoquinone + NADH + (n+1) H(+)(in) = a plastoquinol + NAD(+) + n H(+)(out). The catalysed reaction is a plastoquinone + NADPH + (n+1) H(+)(in) = a plastoquinol + NADP(+) + n H(+)(out). Its function is as follows. NDH-1 shuttles electrons from an unknown electron donor, via FMN and iron-sulfur (Fe-S) centers, to quinones in the respiratory and/or the photosynthetic chain. The immediate electron acceptor for the enzyme in this species is believed to be plastoquinone. Couples the redox reaction to proton translocation, and thus conserves the redox energy in a proton gradient. Cyanobacterial NDH-1 also plays a role in inorganic carbon-concentration. The sequence is that of NAD(P)H-quinone oxidoreductase subunit H from Prochlorococcus marinus (strain MIT 9211).